The primary structure comprises 152 residues: Snaclec lebecin subunit alpha (152 aa).

The first 23 residues, Met1–Ala23, serve as a signal peptide directing secretion. Intrachain disulfides connect Cys27–Cys38, Cys54–Cys147, and Cys122–Cys139. One can recognise a C-type lectin domain in the interval Tyr34–Ser148.

Heterodimer with the beta subunit (AC W5XCJ6); disulfide-linked. Expressed by the venom gland.

The protein resides in the secreted. Functionally, inhibits human breast cancer cells (MDA-MB231) migration and proliferation, as well as their adhesion to fibrinogen and fibronectin. This inhibition may be due to the binding to receptors of the integrin family, probably alpha-v/beta-3 (ITGAV/ITGB3) (40% inhibition of cell adhesion) and alpha-5/beta-1 (ITGA5/ITGB1) (by comparison with lebectin). This Macrovipera lebetinus (Levantine viper) protein is Snaclec lebecin subunit alpha.